The sequence spans 329 residues: UDP-2,3-diacylglucosamine pyrophosphatase LpxG (329 aa).

A helical membrane pass occupies residues 2–24 (FVFVGSTVSLTAIVAAPVLTWIW). Residues Asp59, His61, Asp91, Asn123, His257, and His259 each coordinate a divalent metal cation.

This sequence belongs to the metallophosphoesterase superfamily. Mn(2+) is required as a cofactor.

It is found in the cell inner membrane. The enzyme catalyses UDP-2,3-diacyl-alpha-D-glucosamine + H2O = 2,3-diacyl-alpha-D-glucosaminyl 1-phosphate + UMP + 2 H(+). It functions in the pathway glycolipid biosynthesis; lipid IV(A) biosynthesis. Functionally, hydrolyzes the pyrophosphate bond of UDP-2,3-diacylglucosamine to form 2,3-diacylglucosamine 1-phosphate (lipid X) and UMP by catalyzing the attack of water at the alpha-P atom. Involved in the biosynthesis of lipid A, a phosphorylated glycolipid that anchors the lipooligosaccharide (LOS) to the outer membrane of the cell. In Chlamydia muridarum (strain MoPn / Nigg), this protein is UDP-2,3-diacylglucosamine pyrophosphatase LpxG.